Here is a 476-residue protein sequence, read N- to C-terminus: Stromelysin-2 (476 aa).

A signal peptide spans 1 to 17 (MEPLAILVLLCFPICSA). Residues 18–99 (YPLHGAVRQD…PRCGVPDVGG (82 aa)) constitute a propeptide, activation peptide. Residues 90–97 (PRCGVPDV) carry the Cysteine switch motif. 6 residues coordinate Zn(2+): cysteine 92, histidine 168, aspartate 170, histidine 183, histidine 196, and histidine 218. Residue glutamate 219 is part of the active site. Zn(2+) contacts are provided by histidine 222 and histidine 228. Hemopexin repeat units follow at residues 286–335 (PVKC…WPSL), 336–382 (PSGL…GFPP), 384–432 (VKKI…FPGI), and 433–476 (EPQV…WLLC). Cysteine 289 and cysteine 476 are disulfide-bonded.

This sequence belongs to the peptidase M10A family. The cofactor is Zn(2+). Requires Ca(2+) as cofactor.

The protein localises to the secreted. Its subcellular location is the extracellular space. It is found in the extracellular matrix. The enzyme catalyses Similar to stromelysin 1, but action on collagen types III, IV and V is weak.. Functionally, can degrade fibronectin, gelatins of type I, III, IV, and V; weakly collagens III, IV, and V. Activates procollagenase. This chain is Stromelysin-2 (Mmp10), found in Rattus norvegicus (Rat).